A 481-amino-acid chain; its full sequence is ATP synthase subunit beta, plastid (481 aa).

An ATP-binding site is contributed by 162–169; that stretch reads GGAGVGKT.

This sequence belongs to the ATPase alpha/beta chains family. As to quaternary structure, F-type ATPases have 2 components, CF(1) - the catalytic core - and CF(0) - the membrane proton channel. CF(1) has five subunits: alpha(3), beta(3), gamma(1), delta(1), epsilon(1). CF(0) has four main subunits: a(1), b(1), b'(1) and c(9-12).

Its subcellular location is the plastid membrane. The enzyme catalyses ATP + H2O + 4 H(+)(in) = ADP + phosphate + 5 H(+)(out). Functionally, produces ATP from ADP in the presence of a proton gradient across the membrane. The catalytic sites are hosted primarily by the beta subunits. This Prototheca wickerhamii protein is ATP synthase subunit beta, plastid (atpB).